The sequence spans 130 residues: MYKAETRGISVTVTPRFVEEESSPDESRYFFAYTVEITNNGRDKVQLRSRHWRIVDGRGALQEVRGAGVVGKQPVLGPGESFSYTSGCPLPTPNGTMEGTYTMATADGESFEAAIPAFSLDVPHVRRVMH.

An ApaG domain is found at 3 to 127 (KAETRGISVT…FSLDVPHVRR (125 aa)).

This is Protein ApaG from Methylobacterium sp. (strain 4-46).